Consider the following 561-residue polypeptide: Cytosolic purine 5'-nucleotidase (561 aa).

The active-site Nucleophile is the D52. Positions 52 and 54 each coordinate GMP. The IMP site is built by D52 and D54. Residues D52 and D54 each contribute to the Mg(2+) site. D54 acts as the Proton donor in catalysis. R144 contacts (2R)-2,3-bisphosphoglycerate. R144 and N154 together coordinate ATP. Residues R144 and N154 each coordinate dATP. N154 provides a ligand contact to adenosine. Residue N154 participates in P(1),P(4)-bis(5'-adenosyl) tetraphosphate binding. R202, D206, K215, T249, and N250 together coordinate GMP. The IMP site is built by R202, D206, K215, T249, N250, S251, and K292. K292 is a GMP binding site. Residue D351 coordinates Mg(2+). K362 is a binding site for (2R)-2,3-bisphosphoglycerate. Residue K362 participates in P(1),P(4)-bis(5'-adenosyl) tetraphosphate binding. At S418 the chain carries Phosphoserine. Residues M436 and Q453 each contribute to the adenosine site. Residues Q453 and R456 each coordinate ATP. Residues Q453 and R456 each coordinate dATP. Q453 provides a ligand contact to P(1),P(4)-bis(5'-adenosyl) tetraphosphate. Residue Y457 participates in (2R)-2,3-bisphosphoglycerate binding. Y457 serves as a coordination point for P(1),P(4)-bis(5'-adenosyl) tetraphosphate. S502, S511, and S527 each carry phosphoserine. Residues 538 to 561 (PLAPQEITHCHDEDDDEEEEEEEE) are disordered. Residues 548 to 561 (HDEDDDEEEEEEEE) form a required for tetramer assembly region. Residues 550-561 (EDDDEEEEEEEE) are compositionally biased toward acidic residues.

It belongs to the 5'(3')-deoxyribonucleotidase family. Homotetramer. Mg(2+) is required as a cofactor. Widely expressed.

Its subcellular location is the cytoplasm. The protein resides in the cytosol. The catalysed reaction is a ribonucleoside 5'-phosphate + H2O = a ribonucleoside + phosphate. The enzyme catalyses a 2'-deoxyribonucleoside + a ribonucleoside 5'-phosphate = a ribonucleoside + a 2'-deoxyribonucleoside 5'-phosphate. It catalyses the reaction IMP + H2O = inosine + phosphate. It carries out the reaction GMP + H2O = guanosine + phosphate. The catalysed reaction is dIMP + H2O = 2'-deoxyinosine + phosphate. The enzyme catalyses dGMP + H2O = 2'-deoxyguanosine + phosphate. It catalyses the reaction XMP + H2O = xanthosine + phosphate. It carries out the reaction inosine + GMP = guanosine + IMP. The catalysed reaction is dGMP + inosine = 2'-deoxyguanosine + IMP. The enzyme catalyses dIMP + inosine = 2'-deoxyinosine + IMP. It catalyses the reaction inosine + UMP = uridine + IMP. It carries out the reaction inosine + CMP = cytidine + IMP. The catalysed reaction is inosine + AMP = IMP + adenosine. Allosterically activated by various compounds including ATP, 2,3-BPG/2,3-Bisphosphoglyceric acid and Ap4A/P1,P4-bis(5'-adenosyl) tetraphosphate. Binding of an allosteric activator is a prerequisiste to magnesium and substrate binding. Inhibited by inorganic phosphate. Functionally, broad specificity cytosolic 5'-nucleotidase that catalyzes the dephosphorylation of 6-hydroxypurine nucleoside 5'-monophosphates. In addition, possesses a phosphotransferase activity by which it can transfer a phosphate from a donor nucleoside monophosphate to an acceptor nucleoside, preferably inosine, deoxyinosine and guanosine. Has the highest activities for IMP and GMP followed by dIMP, dGMP and XMP. Could also catalyze the transfer of phosphates from pyrimidine monophosphates but with lower efficiency. Through these activities regulates the purine nucleoside/nucleotide pools within the cell. This is Cytosolic purine 5'-nucleotidase from Homo sapiens (Human).